We begin with the raw amino-acid sequence, 670 residues long: DNA ligase (670 aa).

Residues 32–36 (DAEYD), 81–82 (SL), and E113 contribute to the NAD(+) site. The N6-AMP-lysine intermediate role is filled by K115. NAD(+) contacts are provided by R136, E173, K290, and K314. Positions 408, 411, 426, and 432 each coordinate Zn(2+). Residues 592–670 (ESDSPFAGKT…EAEMIRLLGE (79 aa)) enclose the BRCT domain.

The protein belongs to the NAD-dependent DNA ligase family. LigA subfamily. Requires Mg(2+) as cofactor. Mn(2+) is required as a cofactor.

It carries out the reaction NAD(+) + (deoxyribonucleotide)n-3'-hydroxyl + 5'-phospho-(deoxyribonucleotide)m = (deoxyribonucleotide)n+m + AMP + beta-nicotinamide D-nucleotide.. Its function is as follows. DNA ligase that catalyzes the formation of phosphodiester linkages between 5'-phosphoryl and 3'-hydroxyl groups in double-stranded DNA using NAD as a coenzyme and as the energy source for the reaction. It is essential for DNA replication and repair of damaged DNA. The polypeptide is DNA ligase (Yersinia pestis bv. Antiqua (strain Antiqua)).